The chain runs to 418 residues: Gamma-glutamyl phosphate reductase (418 aa).

The protein belongs to the gamma-glutamyl phosphate reductase family.

It is found in the cytoplasm. The catalysed reaction is L-glutamate 5-semialdehyde + phosphate + NADP(+) = L-glutamyl 5-phosphate + NADPH + H(+). Its pathway is amino-acid biosynthesis; L-proline biosynthesis; L-glutamate 5-semialdehyde from L-glutamate: step 2/2. Functionally, catalyzes the NADPH-dependent reduction of L-glutamate 5-phosphate into L-glutamate 5-semialdehyde and phosphate. The product spontaneously undergoes cyclization to form 1-pyrroline-5-carboxylate. The sequence is that of Gamma-glutamyl phosphate reductase from Histophilus somni (strain 2336) (Haemophilus somnus).